Reading from the N-terminus, the 395-residue chain is Cyclomarin C epoxidase CymV (395 aa).

This sequence belongs to the cytochrome P450 family.

Functionally, cytochrome P450; part of the gene cluster that mediates the biosynthesis of cyclic heptapeptides, known as cyclomarins and also of cyclic dipeptides, called cyclomarazines, which have both antimicrobial and cytotoxic effects. First, CymD catalyzes the reverse N-prenylation of monomeric L-tryptophan with dimethylallyl diphosphate (DMAPP) to form N-(1,1-dimethylallyl)-tryptophan (r-N-DMAT). The N-(1,1-dimethylallyl)-tryptophan produced by CymD is then combined with a range of standard and nonproteinogenic amino acid substrates to synthesize the peptides, a process that is probably catalyzed by the non-canonical nonribosomal peptide synthetase (NRPS), CymA. Other proteins in the cluster catalyze further modifications of the peptides including CymV which catalyzes the oxidation of olefinic cyclomarins and cyclomarazines to their respective epoxide derivatives. This Salinispora arenicola (strain CNS-205) protein is Cyclomarin C epoxidase CymV.